The primary structure comprises 678 residues: Penicillin-binding protein activator LpoA (678 aa).

The N-terminal stretch at 1 to 26 is a signal peptide; it reads MVPSTFSRLKAARCLPVVLAALIFAG. C27 is lipidated: N-palmitoyl cysteine. A lipid anchor (S-diacylglycerol cysteine) is attached at C27. Composition is skewed to low complexity over residues 300–310, 330–340, and 513–528; these read AADVAEQPQPQ, QPAAQPVPVSA, and TTNNPTLQTTPTDDQF. 2 disordered regions span residues 300 to 340 and 496 to 528; these read AADV…PVSA and ALTGSPITPRATTDSGMTTNNPTLQTTPTDDQF.

This sequence belongs to the LpoA family. As to quaternary structure, interacts with PBP1a.

It is found in the cell outer membrane. In terms of biological role, regulator of peptidoglycan synthesis that is essential for the function of penicillin-binding protein 1A (PBP1a). This chain is Penicillin-binding protein activator LpoA, found in Shigella flexneri serotype 5b (strain 8401).